The primary structure comprises 200 residues: Adenylate kinase (200 aa).

10–15 lines the ATP pocket; that stretch reads GAGKGT. Residues 30–59 are NMP; the sequence is STGDMLRAAVAAETPVGLEAKAIMESGGLV. AMP-binding positions include Thr-31, Arg-36, 57–59, 85–88, and Gln-92; these read GLV and GFPR. The interval 126-142 is LID; that stretch reads KRAEETAARGQPVRKDD. Residue Arg-127 participates in ATP binding. AMP is bound by residues Arg-139 and Arg-150. Lys-178 provides a ligand contact to ATP.

It belongs to the adenylate kinase family. Monomer.

It is found in the cytoplasm. The catalysed reaction is AMP + ATP = 2 ADP. The protein operates within purine metabolism; AMP biosynthesis via salvage pathway; AMP from ADP: step 1/1. Catalyzes the reversible transfer of the terminal phosphate group between ATP and AMP. Plays an important role in cellular energy homeostasis and in adenine nucleotide metabolism. This Methylorubrum extorquens (strain PA1) (Methylobacterium extorquens) protein is Adenylate kinase.